We begin with the raw amino-acid sequence, 626 residues long: Glycosyltransferase 25 family member (626 aa).

The first 21 residues, 1–21 (MLKKQVFYGILLICAFVCIYG), serve as a signal peptide directing secretion. N-linked (GlcNAc...) asparagine glycosylation is found at N113, N234, N272, and N533. The Prevents secretion from ER motif lies at 623 to 626 (HQEL).

The protein belongs to the glycosyltransferase 25 family.

Its subcellular location is the endoplasmic reticulum lumen. This chain is Glycosyltransferase 25 family member, found in Drosophila pseudoobscura pseudoobscura (Fruit fly).